Here is a 384-residue protein sequence, read N- to C-terminus: Succinyl-diaminopimelate desuccinylase (384 aa).

H71 serves as a coordination point for Zn(2+). Residue D73 is part of the active site. D104 lines the Zn(2+) pocket. E138 (proton acceptor) is an active-site residue. 3 residues coordinate Zn(2+): E139, E167, and H353.

Belongs to the peptidase M20A family. DapE subfamily. As to quaternary structure, homodimer. It depends on Zn(2+) as a cofactor. Co(2+) is required as a cofactor.

It catalyses the reaction N-succinyl-(2S,6S)-2,6-diaminopimelate + H2O = (2S,6S)-2,6-diaminopimelate + succinate. Its pathway is amino-acid biosynthesis; L-lysine biosynthesis via DAP pathway; LL-2,6-diaminopimelate from (S)-tetrahydrodipicolinate (succinylase route): step 3/3. In terms of biological role, catalyzes the hydrolysis of N-succinyl-L,L-diaminopimelic acid (SDAP), forming succinate and LL-2,6-diaminopimelate (DAP), an intermediate involved in the bacterial biosynthesis of lysine and meso-diaminopimelic acid, an essential component of bacterial cell walls. The chain is Succinyl-diaminopimelate desuccinylase from Aromatoleum aromaticum (strain DSM 19018 / LMG 30748 / EbN1) (Azoarcus sp. (strain EbN1)).